We begin with the raw amino-acid sequence, 86 residues long: Large ribosomal subunit protein bL31B (86 aa).

This sequence belongs to the bacterial ribosomal protein bL31 family. Type B subfamily. In terms of assembly, part of the 50S ribosomal subunit.

In Cupriavidus pinatubonensis (strain JMP 134 / LMG 1197) (Cupriavidus necator (strain JMP 134)), this protein is Large ribosomal subunit protein bL31B.